Consider the following 553-residue polypeptide: Putative transport protein KPN78578_40470 (553 aa).

The next 5 helical transmembrane spans lie at 4 to 24 (IALTVSVLALVAVVGLWIGNV), 28 to 48 (GVGFGIGGVLFGGIIVGHFVD), 65 to 85 (FGLILFVYTIGIQVGPGFFAS), 95 to 115 (LFAILIVILGGLVTAVLHKLF), and 158 to 178 (MSYAMAYPFGICGILLTMWLV). RCK C-terminal domains follow at residues 192–276 (RFEE…VIGQ) and 279–361 (ATSL…ELGN). The next 6 helical transmembrane spans lie at 371–391 (MLPVFIGIGLGVLLGSIPLFI), 403–425 (AGGPLIMALILGRIGSIGKLYWF), 437–457 (LGIVLFLAVVGLKSGGDFVAT), 464–484 (LSWIAYGIFITAIPLLTVGVL), 493–513 (YLTLCGMLAGSMTDPPALAFA), and 532–552 (PLVMFLRIITPQLLAVLFWGL).

This sequence belongs to the AAE transporter (TC 2.A.81) family. YidE subfamily.

It localises to the cell membrane. In Klebsiella pneumoniae subsp. pneumoniae (strain ATCC 700721 / MGH 78578), this protein is Putative transport protein KPN78578_40470.